The chain runs to 547 residues: Chaperonin GroEL (547 aa).

ATP is bound by residues 30–33, Lys51, 87–91, Gly415, and Asp496; these read TLGP and DGTTT.

It belongs to the chaperonin (HSP60) family. Forms a cylinder of 14 subunits composed of two heptameric rings stacked back-to-back. Interacts with the co-chaperonin GroES.

It localises to the cytoplasm. The catalysed reaction is ATP + H2O + a folded polypeptide = ADP + phosphate + an unfolded polypeptide.. Its function is as follows. Together with its co-chaperonin GroES, plays an essential role in assisting protein folding. The GroEL-GroES system forms a nano-cage that allows encapsulation of the non-native substrate proteins and provides a physical environment optimized to promote and accelerate protein folding. In Actinobacillus pleuropneumoniae serotype 7 (strain AP76), this protein is Chaperonin GroEL.